Here is a 296-residue protein sequence, read N- to C-terminus: 4-hydroxybenzoate octaprenyltransferase (296 aa).

9 helical membrane-spanning segments follow: residues 29–49 (IGIY…AEGV), 55–75 (LFIF…INDY), 102–122 (ALVL…FTNA), 124–141 (TIWL…YPFM), 146–166 (FYPQ…AFTA), 169–189 (GSLP…TVAY), 216–236 (ADRL…LLAG), 239–259 (FELG…FVWE), and 271–291 (CFNA…GIVL).

Belongs to the UbiA prenyltransferase family. Mg(2+) serves as cofactor.

The protein resides in the cell inner membrane. The catalysed reaction is all-trans-octaprenyl diphosphate + 4-hydroxybenzoate = 4-hydroxy-3-(all-trans-octaprenyl)benzoate + diphosphate. It functions in the pathway cofactor biosynthesis; ubiquinone biosynthesis. Its function is as follows. Catalyzes the prenylation of para-hydroxybenzoate (PHB) with an all-trans polyprenyl group. Mediates the second step in the final reaction sequence of ubiquinone-8 (UQ-8) biosynthesis, which is the condensation of the polyisoprenoid side chain with PHB, generating the first membrane-bound Q intermediate 3-octaprenyl-4-hydroxybenzoate. This chain is 4-hydroxybenzoate octaprenyltransferase, found in Ectopseudomonas mendocina (strain ymp) (Pseudomonas mendocina).